A 604-amino-acid polypeptide reads, in one-letter code: Terpenoid synthase 30 (604 aa).

5 residues coordinate Mg(2+): Asn356, Asp360, Asn500, Thr504, and Glu508. Positions 356-360 (NDVCD) match the DDXXD motif; degenerate motif.

This sequence belongs to the terpene synthase family. Tpsa subfamily. The cofactor is Mg(2+). Mn(2+) is required as a cofactor.

It is found in the cytoplasm. It participates in secondary metabolite biosynthesis; terpenoid biosynthesis. Its function is as follows. Involved in terpene biosynthesis in roots. Possesses sesquiterpene (C15) synthase activity and diterpene (C20) synthase activity in vitro. The chain is Terpenoid synthase 30 from Arabidopsis thaliana (Mouse-ear cress).